The chain runs to 195 residues: Pyridoxal 5'-phosphate synthase subunit PdxT (195 aa).

An L-glutamine-binding site is contributed by 46-48; the sequence is GES. C78 (nucleophile) is an active-site residue. Residues R105 and 133 to 134 contribute to the L-glutamine site; that span reads IR. Catalysis depends on charge relay system residues H169 and E171.

It belongs to the glutaminase PdxT/SNO family. In terms of assembly, in the presence of PdxS, forms a dodecamer of heterodimers. Only shows activity in the heterodimer.

It carries out the reaction aldehydo-D-ribose 5-phosphate + D-glyceraldehyde 3-phosphate + L-glutamine = pyridoxal 5'-phosphate + L-glutamate + phosphate + 3 H2O + H(+). The catalysed reaction is L-glutamine + H2O = L-glutamate + NH4(+). Its pathway is cofactor biosynthesis; pyridoxal 5'-phosphate biosynthesis. In terms of biological role, catalyzes the hydrolysis of glutamine to glutamate and ammonia as part of the biosynthesis of pyridoxal 5'-phosphate. The resulting ammonia molecule is channeled to the active site of PdxS. The chain is Pyridoxal 5'-phosphate synthase subunit PdxT from Shouchella clausii (strain KSM-K16) (Alkalihalobacillus clausii).